The following is a 1270-amino-acid chain: DNA-directed RNA polymerase subunit beta (1270 aa).

Belongs to the RNA polymerase beta chain family. The RNAP catalytic core consists of 2 alpha, 1 beta, 1 beta' and 1 omega subunit. When a sigma factor is associated with the core the holoenzyme is formed, which can initiate transcription.

It catalyses the reaction RNA(n) + a ribonucleoside 5'-triphosphate = RNA(n+1) + diphosphate. DNA-dependent RNA polymerase catalyzes the transcription of DNA into RNA using the four ribonucleoside triphosphates as substrates. In Christiangramia forsetii (strain DSM 17595 / CGMCC 1.15422 / KT0803) (Gramella forsetii), this protein is DNA-directed RNA polymerase subunit beta.